Consider the following 1571-residue polypeptide: Paternally-expressed gene 3 protein (1571 aa).

Disordered stretches follow at residues 1 to 120 and 137 to 241; these read MYHH…NPIQ and AEDD…QERG. Composition is skewed to basic and acidic residues over residues 35–56, 80–99, 169–186, 193–215, and 223–241; these read GSERDLERRGRSRDVEPRDRWP, FGLDRDDDRRSMDYESRSQD, PEAKKPSHRRGICEDESS, KFIKDVARNPKSGRARELNERPP, and DNWKDSSSSRRESVIQERG. The segment at 199–265 is 10 X 5 AA repeat of P-H-X-X-E; it reads ARNPKSGRAR…DLASRSRALE (67 aa). The segment at 199 to 265 is 3 X 5 AA repeat of P-H-D-D-K; the sequence is ARNPKSGRAR…DLASRSRALE (67 aa). C2H2-type zinc fingers lie at residues 325–347, 378–400, 436–458, and 520–542; these read YVCDECGRQFSVISEFVEHQIMH, FECKECGETFSRSAALAEHRQIH, YECKVCKETFLHSSALIEHQKIH, and YECKVCGESFLHLSSLREHQKIH. The disordered stretch occupies residues 456–495; the sequence is KIHGRGNSDDRDNERERERDRLRARAREQRERERERERER. Disordered regions lie at residues 585 to 649, 672 to 713, and 764 to 820; these read ALMG…LKFP, EAQK…TYEG, and REDA…AKKK. Residues 592–614 show a composition bias toward basic and acidic residues; sequence SSEHQKNRSRRNFFEGRGFEKPF. Composition is skewed to polar residues over residues 770–781 and 799–808; these read GSSSSNYHTPNV and DVTFSVPSSS. Basic and acidic residues predominate over residues 809–820; the sequence is VREHQKARAKKK. Residues 850–872 form a C2H2-type 5 zinc finger; the sequence is FECQECGEAFARRSELIEHQKIH. Residues 937–1070 form a disordered region; it reads FNAEEPHDKE…ESHGQEKVED (134 aa). The segment covering 940 to 1070 has biased composition (basic and acidic residues); that stretch reads EEPHDKETHG…ESHGQEKVED (131 aa). Repeat copies occupy residues 942-946, 967-971, 987-991, 992-996, 997-1001, 1002-1006, 1007-1011, 1012-1016, 1017-1021, 1022-1026, 1027-1031, 1032-1036, and 1047-1051. 4 C2H2-type zinc fingers span residues 1091-1113, 1147-1169, 1209-1231, and 1266-1289; these read YECQDCGLGFTDLNDLTSHQDTH, YECPKCGESFIHSSLLFEHQRVH, IRCRQCGQGFIHSSALNEHMRQH, and FECTICGECFFTAKQLGDHHTKVH. A C2H2-type 10; degenerate zinc finger spans residues 1317–1339; the sequence is YECKDCGQSFLDDTVIAERMVFH. Positions 1373-1487 are disordered; it reads NAEAAEPEVE…DQEIEVEEPY (115 aa). Composition is skewed to acidic residues over residues 1377 to 1397, 1405 to 1418, and 1431 to 1485; these read AEPEVEAAEPEVEAAEPEVEA, EGPDGEAAEPDGEA, and DADE…EVEE. 2 consecutive C2H2-type zinc fingers follow at residues 1488–1510 and 1547–1569; these read YNCHECAETFASSSAFGEHLKSH and FKCDVCGQLFNDRLSLARHQNSH.

It belongs to the krueppel C2H2-type zinc-finger protein family. Homodimer. Interacts with SIAH1A and SIAH2. Interacts with TRAF2. Brain, glial cells, neurons, skeletal muscle, uterus and placenta. In the placenta it is found in all trophoblast cells.

It localises to the nucleus. Its subcellular location is the cytoplasm. Its function is as follows. Induces apoptosis in cooperation with SIAH1A. Acts as a mediator between p53/TP53 and BAX in a neuronal death pathway that is activated by DNA damage. Acts synergistically with TRAF2 and inhibits TNF induced apoptosis through activation of NF-kappa-B. Plays a role in regulating maternal behavior and offspring growth. In Mus musculus (Mouse), this protein is Paternally-expressed gene 3 protein (Peg3).